A 296-amino-acid polypeptide reads, in one-letter code: Polyamine aminopropyltransferase (296 aa).

The PABS domain occupies 16–251; the sequence is HLWYFEYYTG…GMWSYTFASK (236 aa). Glutamine 46 contributes to the S-methyl-5'-thioadenosine binding site. 2 residues coordinate spermidine: histidine 77 and aspartate 101. Residues glutamate 121 and 152–153 contribute to the S-methyl-5'-thioadenosine site; that span reads NG. Aspartate 170 serves as the catalytic Proton acceptor. Residue 170–173 participates in spermidine binding; sequence DSTD.

Belongs to the spermidine/spermine synthase family. Homodimer or homotetramer.

The protein localises to the cytoplasm. It catalyses the reaction S-adenosyl 3-(methylsulfanyl)propylamine + putrescine = S-methyl-5'-thioadenosine + spermidine + H(+). It participates in amine and polyamine biosynthesis; spermidine biosynthesis; spermidine from putrescine: step 1/1. Its function is as follows. Catalyzes the irreversible transfer of a propylamine group from the amino donor S-adenosylmethioninamine (decarboxy-AdoMet) to putrescine (1,4-diaminobutane) to yield spermidine. This chain is Polyamine aminopropyltransferase, found in Thermotoga neapolitana (strain ATCC 49049 / DSM 4359 / NBRC 107923 / NS-E).